A 426-amino-acid chain; its full sequence is Histidine--tRNA ligase (426 aa).

Belongs to the class-II aminoacyl-tRNA synthetase family. Homodimer.

The protein localises to the cytoplasm. The enzyme catalyses tRNA(His) + L-histidine + ATP = L-histidyl-tRNA(His) + AMP + diphosphate + H(+). The protein is Histidine--tRNA ligase of Legionella pneumophila (strain Paris).